Consider the following 631-residue polypeptide: 1-deoxy-D-xylulose-5-phosphate synthase (631 aa).

Thiamine diphosphate-binding positions include histidine 87 and 128-130 (GHS). Position 159 (aspartate 159) interacts with Mg(2+). Thiamine diphosphate contacts are provided by residues 160 to 161 (GA), asparagine 188, phenylalanine 295, and glutamate 377. Asparagine 188 provides a ligand contact to Mg(2+).

The protein belongs to the transketolase family. DXPS subfamily. As to quaternary structure, homodimer. It depends on Mg(2+) as a cofactor. Thiamine diphosphate serves as cofactor.

The enzyme catalyses D-glyceraldehyde 3-phosphate + pyruvate + H(+) = 1-deoxy-D-xylulose 5-phosphate + CO2. It functions in the pathway metabolic intermediate biosynthesis; 1-deoxy-D-xylulose 5-phosphate biosynthesis; 1-deoxy-D-xylulose 5-phosphate from D-glyceraldehyde 3-phosphate and pyruvate: step 1/1. In terms of biological role, catalyzes the acyloin condensation reaction between C atoms 2 and 3 of pyruvate and glyceraldehyde 3-phosphate to yield 1-deoxy-D-xylulose-5-phosphate (DXP). The polypeptide is 1-deoxy-D-xylulose-5-phosphate synthase (Pseudomonas entomophila (strain L48)).